The following is a 286-amino-acid chain: 4-hydroxy-3-methylbut-2-enyl diphosphate reductase (286 aa).

Residue C12 participates in [4Fe-4S] cluster binding. (2E)-4-hydroxy-3-methylbut-2-enyl diphosphate contacts are provided by H46 and H79. Dimethylallyl diphosphate-binding residues include H46 and H79. Isopentenyl diphosphate is bound by residues H46 and H79. C101 contacts [4Fe-4S] cluster. H129 is a (2E)-4-hydroxy-3-methylbut-2-enyl diphosphate binding site. H129 lines the dimethylallyl diphosphate pocket. H129 contributes to the isopentenyl diphosphate binding site. Catalysis depends on E131, which acts as the Proton donor. T169 contributes to the (2E)-4-hydroxy-3-methylbut-2-enyl diphosphate binding site. C198 is a binding site for [4Fe-4S] cluster. (2E)-4-hydroxy-3-methylbut-2-enyl diphosphate contacts are provided by S226, N228, and S270. S226, N228, and S270 together coordinate dimethylallyl diphosphate. Isopentenyl diphosphate is bound by residues S226, N228, and S270.

It belongs to the IspH family. It depends on [4Fe-4S] cluster as a cofactor.

The catalysed reaction is isopentenyl diphosphate + 2 oxidized [2Fe-2S]-[ferredoxin] + H2O = (2E)-4-hydroxy-3-methylbut-2-enyl diphosphate + 2 reduced [2Fe-2S]-[ferredoxin] + 2 H(+). It carries out the reaction dimethylallyl diphosphate + 2 oxidized [2Fe-2S]-[ferredoxin] + H2O = (2E)-4-hydroxy-3-methylbut-2-enyl diphosphate + 2 reduced [2Fe-2S]-[ferredoxin] + 2 H(+). It functions in the pathway isoprenoid biosynthesis; dimethylallyl diphosphate biosynthesis; dimethylallyl diphosphate from (2E)-4-hydroxy-3-methylbutenyl diphosphate: step 1/1. Its pathway is isoprenoid biosynthesis; isopentenyl diphosphate biosynthesis via DXP pathway; isopentenyl diphosphate from 1-deoxy-D-xylulose 5-phosphate: step 6/6. Catalyzes the conversion of 1-hydroxy-2-methyl-2-(E)-butenyl 4-diphosphate (HMBPP) into a mixture of isopentenyl diphosphate (IPP) and dimethylallyl diphosphate (DMAPP). Acts in the terminal step of the DOXP/MEP pathway for isoprenoid precursor biosynthesis. The protein is 4-hydroxy-3-methylbut-2-enyl diphosphate reductase of Solidesulfovibrio magneticus (strain ATCC 700980 / DSM 13731 / RS-1) (Desulfovibrio magneticus).